Here is a 284-residue protein sequence, read N- to C-terminus: Xyloglucan endotransglucosylase/hydrolase protein 22 (284 aa).

Positions 1–21 (MAITYLLPLFLSLIITSSVSA) are cleaved as a signal peptide. The 190-residue stretch at 22–211 (NFQRDVEITW…WSKAPFTASY (190 aa)) folds into the GH16 domain. Residue E97 is the Nucleophile of the active site. The active-site Proton donor is E101. E101 provides a ligand contact to xyloglucan. N-linked (GlcNAc...) asparagine glycosylation occurs at N105. Xyloglucan-binding positions include 114 to 116 (HTN), 124 to 126 (DKE), 190 to 191 (DW), and G195. C219 and C228 form a disulfide bridge. An N-linked (GlcNAc...) asparagine glycan is attached at N230. C267 and C281 form a disulfide bridge. A xyloglucan-binding site is contributed by R272.

This sequence belongs to the glycosyl hydrolase 16 family. XTH group 2 subfamily. Contains at least one intrachain disulfide bond essential for its enzymatic activity. In terms of processing, N-glycosylated; essential for its enzymatic activity. In terms of tissue distribution, highly expressed. Predominantly expressed in green siliques. Expressed in young expanding leaves, trichomes, lateral root primordia, vascular tissue, abscission zones and elongating hypocols. Following wind stimulation, it decreases in the leaves of wind-stimulated plants, while it strongly increases in sites around cells of the pith parenchyma, between the vascular elements, and within the epidermis.

The protein localises to the secreted. Its subcellular location is the cell wall. It is found in the extracellular space. The protein resides in the apoplast. The enzyme catalyses breaks a beta-(1-&gt;4) bond in the backbone of a xyloglucan and transfers the xyloglucanyl segment on to O-4 of the non-reducing terminal glucose residue of an acceptor, which can be a xyloglucan or an oligosaccharide of xyloglucan.. Its function is as follows. Catalyzes xyloglucan endohydrolysis (XEH) and/or endotransglycosylation (XET). Cleaves and religates xyloglucan polymers, an essential constituent of the primary cell wall, and thereby participates in cell wall construction of growing tissues. Its induction in case of mechanical stress, suggests that it may contribute in the adaptive changes in morphogenesis by being recruited to alter tissues tensil strength, or flexibility, enabling adaptation to mechanically stressful environments. The polypeptide is Xyloglucan endotransglucosylase/hydrolase protein 22 (XTH22) (Arabidopsis thaliana (Mouse-ear cress)).